The chain runs to 376 residues: Palmitoyl-[acyl-carrier-protein] 4-desaturase 2, chloroplastic (376 aa).

The transit peptide at 1 to 33 (MELHLALRASPLPAADPGRRPPPPRGNFATNCT) directs the protein to the chloroplast. The Fe cation site is built by glutamate 114, glutamate 149, histidine 152, glutamate 202, glutamate 235, and histidine 238.

This sequence belongs to the fatty acid desaturase type 2 family. As to quaternary structure, homodimer. Fe(2+) serves as cofactor. In terms of tissue distribution, preferentially expressed in the flower labellum.

It localises to the plastid. The protein resides in the chloroplast stroma. It catalyses the reaction hexadecanoyl-[ACP] + 2 reduced [2Fe-2S]-[ferredoxin] + O2 + 2 H(+) = (4Z)-hexadecenoyl-[ACP] + 2 oxidized [2Fe-2S]-[ferredoxin] + 2 H2O. It carries out the reaction octadecanoyl-[ACP] + 2 reduced [2Fe-2S]-[ferredoxin] + O2 + 2 H(+) = (9Z)-octadecenoyl-[ACP] + 2 oxidized [2Fe-2S]-[ferredoxin] + 2 H2O. The protein operates within lipid metabolism; fatty acid metabolism. In terms of biological role, converts stearoyl-ACP to oleoyl-ACP by introduction of a cis double bond between carbons 9 and 10 of the acyl chain. Converts palmitoyl-ACP to (4Z)-hexadec-4-enoyl-ACP by introduction of a cis double bond between carbons 4 and 5 of the acyl chain. Catalyzes the desaturation of saturated fatty acid 18:0 and 16:0 to generate 18:1 (delta-9) and 16:1 (delta-4) intermediates, expected to give rise to 9-alkenes and 12-alkenes, respectively. The chain is Palmitoyl-[acyl-carrier-protein] 4-desaturase 2, chloroplastic (SAD2) from Ophrys sphegodes (Early spider orchid).